The primary structure comprises 414 residues: Succinylornithine transaminase (414 aa).

At lysine 260 the chain carries N6-(pyridoxal phosphate)lysine.

This sequence belongs to the class-III pyridoxal-phosphate-dependent aminotransferase family. AstC subfamily. The cofactor is pyridoxal 5'-phosphate.

The enzyme catalyses N(2)-succinyl-L-ornithine + 2-oxoglutarate = N-succinyl-L-glutamate 5-semialdehyde + L-glutamate. The protein operates within amino-acid degradation; L-arginine degradation via AST pathway; L-glutamate and succinate from L-arginine: step 3/5. Catalyzes the transamination of N(2)-succinylornithine and alpha-ketoglutarate into N(2)-succinylglutamate semialdehyde and glutamate. Can also act as an acetylornithine aminotransferase. The polypeptide is Succinylornithine transaminase (Yersinia enterocolitica serotype O:8 / biotype 1B (strain NCTC 13174 / 8081)).